The sequence spans 640 residues: Probable potassium transport system protein Kup 1 (640 aa).

12 helical membrane-spanning segments follow: residues 25–45 (LVLA…LYAL), 65–85 (VVSL…VMVL), 115–135 (AVGW…DGVI), 153–173 (PALA…LFMI), 181–201 (VGAA…ALGL), 227–247 (GFAG…AEAL), 263–283 (WYGL…ALLL), 305–325 (MVAL…TAVF), 353–373 (IYLP…VLGF), 381–401 (AAFG…FAVL), 410–430 (WWAV…FWLA), and 438–458 (GGWL…CWFG).

The protein belongs to the HAK/KUP transporter (TC 2.A.72) family.

The protein localises to the cell inner membrane. It carries out the reaction K(+)(in) + H(+)(in) = K(+)(out) + H(+)(out). Transport of potassium into the cell. Likely operates as a K(+):H(+) symporter. In Chromobacterium violaceum (strain ATCC 12472 / DSM 30191 / JCM 1249 / CCUG 213 / NBRC 12614 / NCIMB 9131 / NCTC 9757 / MK), this protein is Probable potassium transport system protein Kup 1.